The sequence spans 460 residues: Elongation factor 1-alpha (460 aa).

Position 2 is a n,N,N-trimethylglycine (Gly-2). Lys-3 carries the post-translational modification N6,N6-dimethyllysine; alternate. Lys-3 bears the N6-methyllysine; alternate mark. The region spanning 6–241 (KTHINVVVIG…DAIEPPKRPT (236 aa)) is the tr-type G domain. The segment at 15 to 22 (GHVDSGKS) is G1. 15–22 (GHVDSGKS) is a binding site for GTP. At Lys-31 the chain carries N6-methyllysine. The tract at residues 71-75 (GITID) is G2. An N6,N6,N6-trimethyllysine modification is found at Lys-80. The segment at 92 to 95 (DAPG) is G3. GTP-binding positions include 92 to 96 (DAPGH) and 154 to 157 (NKMD). The segment at 154 to 157 (NKMD) is G4. Positions 193–195 (SGF) are G5. Residue Lys-317 is modified to N6,N6-dimethyllysine; alternate. Lys-317 is modified (N6-methyllysine; alternate). Lys-391 is modified (N6-methyllysine).

It belongs to the TRAFAC class translation factor GTPase superfamily. Classic translation factor GTPase family. EF-Tu/EF-1A subfamily.

Its subcellular location is the cytoplasm. Its function is as follows. This protein promotes the GTP-dependent binding of aminoacyl-tRNA to the A-site of ribosomes during protein biosynthesis. This Neurospora crassa (strain ATCC 24698 / 74-OR23-1A / CBS 708.71 / DSM 1257 / FGSC 987) protein is Elongation factor 1-alpha (tef-1).